Here is a 594-residue protein sequence, read N- to C-terminus: MNLFSSTTLTMLFVLTLPIMMTNTNIYKSDKYPTYVKNTVSSAFLISLVPMIAFTNTGQEMIISNWHWITIQTLKLTLSFKADYFSIVFAPVALFVTWSIMEFSMWYMHSDPHINQFFKYLLLFLITMMILVTANNLFQLFIGWEGVGIMSFLLIGWWHGRTDANTAAIQAILYNRIGDVGFIMAMAWFLSNLNTWDMQQIFMINPTHSNLPLMGLILAATGKSAQFGLHPWLPSAMEGPTPVSALLHSSTMVVAGVFLLIRFYPMMENNNLMQTITMCLGAITTLFTAMCALTQNDIKKIIAFSTSSQLGLMMVTIGINQPHLAFLHICTHAFFKAMLFMCSGSIIHNLNNEQDIRKMGGLFKTMPFTTTTLIVGSMALTGVPFLTGFYSKDLIIEAANTSYSNAWALLITLVATSLTAVYSTRIIFFALLGHPRFPTSTLIHENNPLLLNSLKRLMAGSIFAGFILSHNLPPMTTPLMTMPPYLKMTALAVTMLGFTLAFEITLNTQNLKYKHPTNSFKFSTLLGYFPTIMHRLPPHLSLTASQKLASSLLDSAWLENILPKSMAHAQLKLSTLVSNQKGLMKMYFSIIPYH.

Transmembrane regions (helical) follow at residues 1–21 (MNLF…PIMM), 43–63 (AFLI…EMII), 87–107 (IVFA…SMWY), 114–134 (INQF…LVTA), 137–157 (LFQL…LIGW), 171–191 (AILY…WFLS), 211–233 (LPLM…HPWL), 241–261 (TPVS…FLLI), 272–292 (LMQT…AMCA), 301–320 (IIAF…IGIN), 325–347 (AFLH…GSII), 366–386 (MPFT…VPFL), 409–429 (LLIT…IIFF), 457–477 (LMAG…PMTT), and 486–506 (LKMT…EITL).

The protein belongs to the complex I subunit 5 family. Core subunit of respiratory chain NADH dehydrogenase (Complex I) which is composed of 45 different subunits.

Its subcellular location is the mitochondrion inner membrane. It catalyses the reaction a ubiquinone + NADH + 5 H(+)(in) = a ubiquinol + NAD(+) + 4 H(+)(out). Its function is as follows. Core subunit of the mitochondrial membrane respiratory chain NADH dehydrogenase (Complex I) which catalyzes electron transfer from NADH through the respiratory chain, using ubiquinone as an electron acceptor. Essential for the catalytic activity and assembly of complex I. The protein is NADH-ubiquinone oxidoreductase chain 5 (MT-ND5) of Hippopotamus amphibius (Hippopotamus).